We begin with the raw amino-acid sequence, 226 residues long: 26S proteasome non-ATPase regulatory subunit 10 (226 aa).

The tract at residues 1–37 (MEGCVSNLMVCNLAYSGKLEELKESILADKSLATRTD) is required for nuclear localization. Residues 1-71 (MEGCVSNLMV…LGVPVNDKDD (71 aa)) are interaction with RB1. ANK repeat units follow at residues 3–36 (GCVS…ATRT), 37–69 (DQDS…VNDK), 70–102 (DDAG…VNAV), 103–135 (NQNG…PDAK), 136–168 (DHYE…TNIQ), 169–201 (DTEG…IYIE), and 202–226 (NKEE…MVEG). The segment at 39-226 (DSRTALHWAC…GLILKRMVEG (188 aa)) is interaction with RELA. The tract at residues 171–226 (EGNTPLHLACDEERVEEAKLLVSQGASIYIENKEEKTPLQVAKGGLGLILKRMVEG) is interaction with RB1.

In terms of assembly, part of transient complex containing PSMD10, PSMC4, PSMC5 and PAAF1 formed during the assembly of the 26S proteasome. Stays associated throughout the assembly of the PA700/19S RC and is released upon association with the 20S core. Interacts with PSMC4. Interacts with RB1. Interacts with CDK4. Interacts with MDM2. Interacts with RELA. Associates with a CDK4:CCND2 serine/threonine kinase complex. Interacts with ARHGDIA and increases the interaction between ARHGDIA and RHOA, hence promotes ARHGDIA inactivation of RHOA and ROCK. As to expression, tends to be up-regulated in cancer cells with RAS mutations, including lung cancers and adenocarconimas (at protein level).

It localises to the cytoplasm. The protein localises to the nucleus. Acts as a chaperone during the assembly of the 26S proteasome, specifically of the PA700/19S regulatory complex (RC). In the initial step of the base subcomplex assembly is part of an intermediate PSMD10:PSMC4:PSMC5:PAAF1 module which probably assembles with a PSMD5:PSMC2:PSMC1:PSMD2 module. Independently of the proteasome, regulates EGF-induced AKT activation through inhibition of the RHOA/ROCK/PTEN pathway, leading to prolonged AKT activation. Plays an important role in RAS-induced tumorigenesis. Functionally, acts as an proto-oncoprotein by being involved in negative regulation of tumor suppressors RB1 and p53/TP53. Overexpression is leading to phosphorylation of RB1 and proteasomal degradation of RB1. Regulates CDK4-mediated phosphorylation of RB1 by competing with CDKN2A for binding with CDK4. Facilitates binding of MDM2 to p53/TP53 and the mono- and polyubiquitination of p53/TP53 by MDM2 suggesting a function in targeting the TP53:MDM2 complex to the 26S proteasome. Involved in p53-independent apoptosis. Involved in regulation of NF-kappa-B by retaining it in the cytoplasm. Binds to the NF-kappa-B component RELA and accelerates its XPO1/CRM1-mediated nuclear export. In Homo sapiens (Human), this protein is 26S proteasome non-ATPase regulatory subunit 10 (PSMD10).